The chain runs to 286 residues: Bifunctional protein FolD (286 aa).

NADP(+) contacts are provided by residues 165–167 and Ser190; that span reads GRS.

It belongs to the tetrahydrofolate dehydrogenase/cyclohydrolase family. In terms of assembly, homodimer.

The enzyme catalyses (6R)-5,10-methylene-5,6,7,8-tetrahydrofolate + NADP(+) = (6R)-5,10-methenyltetrahydrofolate + NADPH. The catalysed reaction is (6R)-5,10-methenyltetrahydrofolate + H2O = (6R)-10-formyltetrahydrofolate + H(+). Its pathway is one-carbon metabolism; tetrahydrofolate interconversion. Functionally, catalyzes the oxidation of 5,10-methylenetetrahydrofolate to 5,10-methenyltetrahydrofolate and then the hydrolysis of 5,10-methenyltetrahydrofolate to 10-formyltetrahydrofolate. The chain is Bifunctional protein FolD from Staphylococcus epidermidis (strain ATCC 35984 / DSM 28319 / BCRC 17069 / CCUG 31568 / BM 3577 / RP62A).